The primary structure comprises 149 residues: L-alanine exporter AlaE (149 aa).

Helical transmembrane passes span 16–36 (FAMV…LSGM), 46–66 (LVAI…RDLI), 85–105 (VLAY…TVGA), and 112–132 (AAVS…GYFL).

The protein belongs to the AlaE exporter family.

Its subcellular location is the cell inner membrane. Functionally, exports L-alanine. The protein is L-alanine exporter AlaE of Salmonella arizonae (strain ATCC BAA-731 / CDC346-86 / RSK2980).